Here is a 488-residue protein sequence, read N- to C-terminus: Dipeptidase 3 (488 aa).

A signal peptide spans 1-35; sequence MQPTGPEGPRALSLRPLGHRLSLLGVLLIIPSLWV. A compositionally biased stretch (low complexity) spans 41 to 60; the sequence is TPSLSSAPTSPGASSAMTTP. Residues 41–74 are disordered; the sequence is TPSLSSAPTSPGASSAMTTPGIPNDTTTSGVTSD. 2 disulfides stabilise this stretch: Cys-143-Cys-222 and Cys-294-Cys-326. An N-linked (GlcNAc...) asparagine glycan is attached at Asn-331. Ser-459 is lipidated: GPI-anchor amidated serine. Positions 460 to 487 are cleaved as a propeptide — removed in mature form; sequence KAPPCPLLGLVAAVTSPAFTLWLCCSGH.

This sequence belongs to the metallo-dependent hydrolases superfamily. Peptidase M19 family. Homodimer; disulfide-linked. Interacts with TEX101; co-localized on the cell surface of spermatocytes, spermatids, and testicular spermatozoa, co-localized only in cytoplasmic droplets of caput and corpus epididymal sperm.

Its subcellular location is the membrane. Lacks dipeptidase activity and is unable to hydrolyze cystinyl-bis-glycine, leukotriene D4 and the beta-lactam antibiotic imipenem. The absence of activity may be due to the inability of serine (instead of aspartate found in DPEP1/2) at position 356 to function as the acid/base catalyst and activate the nucleophilic water/hydroxide. In Rattus norvegicus (Rat), this protein is Dipeptidase 3 (Dpep3).